Here is a 1060-residue protein sequence, read N- to C-terminus: MDSGAGGRRCPEAALLILGPPRMEHLRHSPGPGGQRLLLPSMLLALLLLLAPSPGHATRVVYKVPEEQPPNTLIGSLAADYGFPDVGHLYKLEVGAPYLRVDGKTGDIFTTETSIDREGLRECQNQLPGDPCILEFEVSITDLVQNGSPRLLEGQIEVQDINDNTPNFASPVITLAIPENTNIGSLFPIPLASDRDAGPNGVASYELQAGPEAQELFGLQVAEDQEEKQPQLIVMGNLDRERWDSYDLTIKVQDGGSPPRASSALLRVTVLDTNDNAPKFERPSYEAELSENSPIGHSVIQVKANDSDQGANAEIEYTFHQAPEVVRRLLRLDRNTGLITVQGPVDREDLSTLRFSVLAKDRGTNPKSARAQVVVTVKDMNDNAPTIEIRGIGLVTHQDGMANISEDVAEETAVALVQVSDRDEGENAAVTCVVAGDVPFQLRQASETGSDSKKKYFLQTTTPLDYEKVKDYTIEIVAVDSGNPPLSSTNSLKVQVVDVNDNAPVFTQSVTEVAFPENNKPGEVIAEITASDADSGSNAELVYSLEPEPAAKGLFTISPETGEIQVKTSLDREQRESYELKVVAADRGSPSLQGTATVLVNVLDCNDNDPKFMLSGYNFSVMENMPALSPVGMVTVIDGDKGENAQVQLSVEQDNGDFVIQNGTGTILSSLSFDREQQSTYTFQLKAVDGGVPPRSAYVGVTINVLDENDNAPYITAPSNTSHKLLTPQTRLGETVSQVAAEDFDSGVNAELIYSIAGGNPYGLFQIGSHSGAITLEKEIERRHHGLHRLVVKVSDRGKPPRYGTALVHLYVNETLANRTLLETLLGHSLDTPLDIDIAGDPEYERSKQRGNILFGVVAGVVAVALLIALAVLVRYCRQREAKSGYQAGKKETKDLYAPKPSGKASKGNKSKGKKSKSPKPVKPVEDEDEAGLQKSLKFNLMSDAPGDSPRIHLPLNYPPGSPDLGRHYRSNSPLPSIQLQPQSPSASKKHQVVQDLPPANTFVGTGDTTSTGSEQYSDYSYRTNPPKYPSKQVGQPFQLSTPQPLPHPYHGAIWTEVWE.

The signal sequence occupies residues Met1–Ala57. Cadherin domains lie at Thr58–Phe168, Ala169–Phe280, Glu281–Ile387, Thr396–Phe506, Thr507–Phe612, Met613–Ile715, and Pro718–Tyr844. Over Thr58–Asn852 the chain is Extracellular. Asn305 and Asn403 each carry an N-linked (GlcNAc...) asparagine glycan. Residues Asn618, Asn662, Asn813, and Asn818 are each glycosylated (N-linked (GlcNAc...) asparagine). Residues Ile853–Leu873 traverse the membrane as a helical segment. Over Val874 to Glu1060 the chain is Cytoplasmic. The span at Ser884 to Tyr897 shows a compositional bias: basic and acidic residues. The interval Ser884–Pro1045 is disordered. A compositionally biased stretch (basic residues) spans Lys907–Lys920. 4 positions are modified to phosphoserine: Ser918, Ser949, Ser962, and Ser984. Low complexity predominate over residues Ser973–Ser986. Composition is skewed to polar residues over residues Phe1003 to Thr1024 and Gln1033 to Pro1043.

Highly expressed in the brain and neuro-glial cells.

Its subcellular location is the cell junction. It is found in the cell membrane. In terms of biological role, may be involved in cell-cell interaction processes and in cell adhesion. The chain is Protocadherin-1 (PCDH1) from Homo sapiens (Human).